The primary structure comprises 174 residues: Crossover junction endodeoxyribonuclease RuvC (174 aa).

Catalysis depends on residues aspartate 8, glutamate 69, and aspartate 141. Mg(2+) contacts are provided by aspartate 8, glutamate 69, and aspartate 141.

The protein belongs to the RuvC family. In terms of assembly, homodimer which binds Holliday junction (HJ) DNA. The HJ becomes 2-fold symmetrical on binding to RuvC with unstacked arms; it has a different conformation from HJ DNA in complex with RuvA. In the full resolvosome a probable DNA-RuvA(4)-RuvB(12)-RuvC(2) complex forms which resolves the HJ. Mg(2+) serves as cofactor.

It localises to the cytoplasm. It catalyses the reaction Endonucleolytic cleavage at a junction such as a reciprocal single-stranded crossover between two homologous DNA duplexes (Holliday junction).. Its function is as follows. The RuvA-RuvB-RuvC complex processes Holliday junction (HJ) DNA during genetic recombination and DNA repair. Endonuclease that resolves HJ intermediates. Cleaves cruciform DNA by making single-stranded nicks across the HJ at symmetrical positions within the homologous arms, yielding a 5'-phosphate and a 3'-hydroxyl group; requires a central core of homology in the junction. The consensus cleavage sequence is 5'-(A/T)TT(C/G)-3'. Cleavage occurs on the 3'-side of the TT dinucleotide at the point of strand exchange. HJ branch migration catalyzed by RuvA-RuvB allows RuvC to scan DNA until it finds its consensus sequence, where it cleaves and resolves the cruciform DNA. The polypeptide is Crossover junction endodeoxyribonuclease RuvC (Xanthomonas euvesicatoria pv. vesicatoria (strain 85-10) (Xanthomonas campestris pv. vesicatoria)).